Consider the following 273-residue polypeptide: Dermonecrotic toxin LsaSicTox-alphaIB1avi (273 aa).

The active site involves H5. Positions 25 and 27 each coordinate Mg(2+). H41 acts as the Nucleophile in catalysis. 2 disulfides stabilise this stretch: C45–C51 and C47–C190. D85 is a binding site for Mg(2+).

This sequence belongs to the arthropod phospholipase D family. Class II subfamily. Mg(2+) serves as cofactor. In terms of tissue distribution, expressed by the venom gland.

Its subcellular location is the secreted. The enzyme catalyses an N-(acyl)-sphingosylphosphocholine = an N-(acyl)-sphingosyl-1,3-cyclic phosphate + choline. It catalyses the reaction an N-(acyl)-sphingosylphosphoethanolamine = an N-(acyl)-sphingosyl-1,3-cyclic phosphate + ethanolamine. It carries out the reaction a 1-acyl-sn-glycero-3-phosphocholine = a 1-acyl-sn-glycero-2,3-cyclic phosphate + choline. The catalysed reaction is a 1-acyl-sn-glycero-3-phosphoethanolamine = a 1-acyl-sn-glycero-2,3-cyclic phosphate + ethanolamine. Functionally, dermonecrotic toxins cleave the phosphodiester linkage between the phosphate and headgroup of certain phospholipids (sphingolipid and lysolipid substrates), forming an alcohol (often choline) and a cyclic phosphate. This toxin acts on sphingomyelin (SM). It may also act on ceramide phosphoethanolamine (CPE), lysophosphatidylcholine (LPC) and lysophosphatidylethanolamine (LPE), but not on lysophosphatidylserine (LPS), and lysophosphatidylglycerol (LPG). It acts by transphosphatidylation, releasing exclusively cyclic phosphate products as second products. Induces dermonecrosis, hemolysis, increased vascular permeability, edema, inflammatory response, and platelet aggregation. The protein is Dermonecrotic toxin LsaSicTox-alphaIB1avi of Loxosceles sabina (Tucson recluse spider).